Reading from the N-terminus, the 213-residue chain is Probable aspartate aminotransferase (213 aa).

The L-aspartate site is built by glycine 47, tryptophan 133, and asparagine 183.

Belongs to the class-I pyridoxal-phosphate-dependent aminotransferase family. In terms of assembly, homodimer. Pyridoxal 5'-phosphate serves as cofactor.

It is found in the cytoplasm. It catalyses the reaction L-aspartate + 2-oxoglutarate = oxaloacetate + L-glutamate. The sequence is that of Probable aspartate aminotransferase (aspC) from Streptomyces griseus.